Here is a 202-residue protein sequence, read N- to C-terminus: Dephospho-CoA kinase (202 aa).

The region spanning 6-202 is the DPCK domain; the sequence is KVSITGDLSS…EYFYALKGAL (197 aa). 14-19 contacts ATP; it reads SSGKTE.

It belongs to the CoaE family.

The protein localises to the cytoplasm. It catalyses the reaction 3'-dephospho-CoA + ATP = ADP + CoA + H(+). It participates in cofactor biosynthesis; coenzyme A biosynthesis; CoA from (R)-pantothenate: step 5/5. Catalyzes the phosphorylation of the 3'-hydroxyl group of dephosphocoenzyme A to form coenzyme A. The chain is Dephospho-CoA kinase from Chlamydia abortus (strain DSM 27085 / S26/3) (Chlamydophila abortus).